Reading from the N-terminus, the 316-residue chain is Protoheme IX farnesyltransferase (316 aa).

The next 9 membrane-spanning stretches (helical) occupy residues 32–52, 53–73, 93–113, 116–136, 152–172, 180–200, 221–241, 252–271, and 289–309; these read VMSLVVFTAFAGLVLAPGHIH, PVLGLIAILCIAVGAGASGAL, IPAGRIAPSEALAFGLVLSGF, VILGLAVNWLSAGILAFTIFF, NIVIGGAAGAFPPMIGWACVT, TVLFLIIFLWTPAHFWALALF, VTKHQIVAYAVLTAVCGILPS, LVAAALGAIFIYCSIAVWRM, and IFYLFAVFSALMIDRLASIFV.

It belongs to the UbiA prenyltransferase family. Protoheme IX farnesyltransferase subfamily.

Its subcellular location is the cell inner membrane. It catalyses the reaction heme b + (2E,6E)-farnesyl diphosphate + H2O = Fe(II)-heme o + diphosphate. The protein operates within porphyrin-containing compound metabolism; heme O biosynthesis; heme O from protoheme: step 1/1. Functionally, converts heme B (protoheme IX) to heme O by substitution of the vinyl group on carbon 2 of heme B porphyrin ring with a hydroxyethyl farnesyl side group. The polypeptide is Protoheme IX farnesyltransferase (Rhizobium leguminosarum bv. trifolii (strain WSM2304)).